We begin with the raw amino-acid sequence, 392 residues long: Succinate--CoA ligase [ADP-forming] subunit beta (392 aa).

An ATP-grasp domain is found at Lys-9–Glu-248. ATP is bound by residues Lys-50, Gly-57–Gly-59, Glu-103, Met-106, and Glu-111. Residues Asn-203 and Asp-217 each coordinate Mg(2+). Substrate contacts are provided by residues Asn-268 and Gly-325–Val-327.

Belongs to the succinate/malate CoA ligase beta subunit family. Heterotetramer of two alpha and two beta subunits. The cofactor is Mg(2+).

The catalysed reaction is succinate + ATP + CoA = succinyl-CoA + ADP + phosphate. It carries out the reaction GTP + succinate + CoA = succinyl-CoA + GDP + phosphate. It participates in carbohydrate metabolism; tricarboxylic acid cycle; succinate from succinyl-CoA (ligase route): step 1/1. Succinyl-CoA synthetase functions in the citric acid cycle (TCA), coupling the hydrolysis of succinyl-CoA to the synthesis of either ATP or GTP and thus represents the only step of substrate-level phosphorylation in the TCA. The beta subunit provides nucleotide specificity of the enzyme and binds the substrate succinate, while the binding sites for coenzyme A and phosphate are found in the alpha subunit. This chain is Succinate--CoA ligase [ADP-forming] subunit beta, found in Chlorobaculum tepidum (strain ATCC 49652 / DSM 12025 / NBRC 103806 / TLS) (Chlorobium tepidum).